A 147-amino-acid chain; its full sequence is Microsomal glutathione S-transferase 2 (147 aa).

A run of 3 helical transmembrane segments spans residues 6–26 (SLLAAVSLLSACQQSYFAWRV), 62–82 (VFIVMLWMAGWYFNQVFAACL), and 107–127 (GFRLSLGILTLLPVLAVLGVA).

Homotrimer.

The protein localises to the endoplasmic reticulum membrane. Its subcellular location is the microsome membrane. The enzyme catalyses RX + glutathione = an S-substituted glutathione + a halide anion + H(+). The catalysed reaction is 1-chloro-2,4-dinitrobenzene + glutathione = 2,4-dinitrophenyl-S-glutathione + chloride + H(+). It carries out the reaction leukotriene C4 = leukotriene A4 + glutathione. It catalyses the reaction (5S)-hydroperoxy-(6E,8Z,11Z,14Z)-eicosatetraenoate + 2 glutathione = (5S)-hydroxy-(6E,8Z,11Z,14Z)-eicosatetraenoate + glutathione disulfide + H2O. Its activity is regulated as follows. Each monomer binds on GSH molecule but only one subunit is catalytically active. Catalyzes several different glutathione-dependent reactions. Catalyzes the glutathione-dependent reduction of lipid hydroperoxides, such as 5-HPETE. Has glutathione transferase activity, toward xenobiotic electrophiles, such as 1-chloro-2, 4-dinitrobenzene (CDNB). Also catalyzes the conjugation of leukotriene A4 with reduced glutathione to form leukotriene C4 (LTC4). Involved in oxidative DNA damage induced by ER stress and anticancer agents by activating LTC4 biosynthetic machinery in nonimmune cells. The chain is Microsomal glutathione S-transferase 2 from Mus musculus (Mouse).